The sequence spans 178 residues: CD209 antigen-like protein C (178 aa).

An intrachain disulfide couples C48 to C59. Residues 54-169 form the C-type lectin domain; sequence VFQGNCYFFS…CTIKKYWICK (116 aa). The N-linked (GlcNAc...) asparagine glycan is linked to N70. Disulfide bonds link C76-C168 and C147-C160. Ca(2+) is bound by residues E138, N140, E145, N156, and D157.

Probable pathogen-recognition receptor. May recognize in a calcium-dependent manner high mannose N-linked oligosaccharides in a variety of pathogen antigens. The chain is CD209 antigen-like protein C (Cd209c) from Mus musculus (Mouse).